The sequence spans 90 residues: Protein RALF-like 29 (90 aa).

The signal sequence occupies residues 1–25 (MIKTKEVTFVTILIVLCVFISTIHA). Cystine bridges form between Cys41–Cys50 and Cys63–Cys69.

The protein belongs to the plant rapid alkalinization factor (RALF) family.

It is found in the secreted. Functionally, cell signaling peptide that may regulate plant stress, growth, and development. Mediates a rapid alkalinization of extracellular space by mediating a transient increase in the cytoplasmic Ca(2+) concentration leading to a calcium-dependent signaling events through a cell surface receptor and a concomitant activation of some intracellular mitogen-activated protein kinases. The polypeptide is Protein RALF-like 29 (RALFL29) (Arabidopsis thaliana (Mouse-ear cress)).